A 682-amino-acid chain; its full sequence is MSRKQLALLEPTLVRQALLDAVKKLSPMVQWRNPVMFIVWVGSLLTTLLAIAMAGGALTGSATFTAAVSIWLWFTVLFANFAEAMAEGRSKAQANSLKGVKKTAFARKLRAPQHDAPVDHVPAEDLRKGDVVLVEAGDIIPCDGEVIEGGASVDESAITGESAPVIRESGGDFASVTGGTRILSDWLVIRCSVNPGETFLDRMIAMVEGAQRRKTPNEIALTILLIALTLVFLLATATIWPFSAWSGNAVSVTVLVALLVCLIPTTIGGLLSAIGVAGMSRMLGANVIATSGRAVEAAGDVDVLLLDKTGTITLGNRQASAFLPARGVEERTLADAAQLSSLADETPEGRSIVVLAKQRFNLRERDLQSLHATFVPFTAQTRMSGINIDQRMIRKGSVDAIRRHVEANGGHFPADVDKQVEEVARQGATPLVVAEGEKVLGIIALKDIVKGGIKERFAQLRKMGIKTVMITGDNRLTAAAIAAEAGVDDFLAEATPEAKLALIRQYQSEGRLVAMTGDGTNDAPALAQADVAVAMNSGTQAAKEAGNMVDLDSNPTKLIEVVHIGKQMLMTRGSLTTFSIANDVAKYFAIIPAAFAAVYPQLAMLNVMGLHSPSSAILSAVIFNALIIVFLIPLALKGVSYRPLSASAMLRRNLWIYGLGGLLVPFIGIKAIDLLLTLSGLV.

Transmembrane regions (helical) follow at residues 35–55 (VMFI…AMAG), 62–82 (ATFT…ANFA), 219–239 (IALT…TATI), and 254–274 (VLVA…LSAI). Residue D307 is the 4-aspartylphosphate intermediate of the active site. Residues D344, E348, 377-384 (FTAQTRMS), and K395 each bind ATP. Mg(2+)-binding residues include D518 and D522. 3 helical membrane passes run 588 to 608 (FAII…LNVM), 616 to 636 (AILS…PLAL), and 656 to 676 (IYGL…DLLL).

The protein belongs to the cation transport ATPase (P-type) (TC 3.A.3) family. Type IA subfamily. As to quaternary structure, the system is composed of three essential subunits: KdpA, KdpB and KdpC.

The protein resides in the cell inner membrane. It catalyses the reaction K(+)(out) + ATP + H2O = K(+)(in) + ADP + phosphate + H(+). Its function is as follows. Part of the high-affinity ATP-driven potassium transport (or Kdp) system, which catalyzes the hydrolysis of ATP coupled with the electrogenic transport of potassium into the cytoplasm. This subunit is responsible for energy coupling to the transport system and for the release of the potassium ions to the cytoplasm. The protein is Potassium-transporting ATPase ATP-binding subunit of Klebsiella pneumoniae subsp. pneumoniae (strain ATCC 700721 / MGH 78578).